The chain runs to 716 residues: Leucine-rich repeat neuronal protein 1 (716 aa).

Residues 1 to 25 (MARLSTGKAACQVVLGLLITSLTES) form the signal peptide. An LRRNT domain is found at 26-72 (SILTSECPQLCVCEIRPWFTPQSTYREATTVDCNDLRLTRIPGNLSS). The Extracellular portion of the chain corresponds to 26 to 631 (SILTSECPQL…DISDHETSTA (606 aa)). N-linked (GlcNAc...) asparagine glycosylation is present at Asn-69. LRR repeat units follow at residues 73–95 (DTQV…QQLF), 96–117 (NLTE…GLAN), 120–141 (QLTT…CLQD), 144–165 (NLQE…AFSG), 168–189 (NLLR…WFDS), 192–213 (NLEI…NFRP), 216–237 (NLRS…ALVG), 240–261 (SLES…ALQK), and 264–285 (NLKF…DFKN). Residues Asn-96 and Asn-117 are each glycosylated (N-linked (GlcNAc...) asparagine). The LRRCT domain occupies 371 to 424 (NPLRCDCVIHWINSNKTNIRFMEPLSMFCAMPPEYRGQQVKEVLIQDSSEQCLP). Asn-385 carries N-linked (GlcNAc...) asparagine glycosylation. Residues 424–515 (PMISHDTFPN…GADTRVATIK (92 aa)) enclose the Ig-like C2-type domain. A disulfide bond links Cys-447 and Cys-499. Asn-517 carries N-linked (GlcNAc...) asparagine glycosylation. Residues 525–619 (QVLKIYVKQT…VNVTTKTAAF (95 aa)) form the Fibronectin type-III domain. A helical membrane pass occupies residues 632-652 (LAAVMGSMFAVISLASIAIYI). The Cytoplasmic segment spans residues 653–716 (AKRFKRKNYH…VDTSRSYYMW (64 aa)). Residues 692–716 (SDKDKDGSADTKPTQVDTSRSYYMW) form a disordered region. A compositionally biased stretch (polar residues) spans 702 to 716 (TKPTQVDTSRSYYMW).

Expressed in brain.

The protein localises to the membrane. The polypeptide is Leucine-rich repeat neuronal protein 1 (Lrrn1) (Mus musculus (Mouse)).